Consider the following 271-residue polypeptide: 2,3,4,5-tetrahydropyridine-2,6-dicarboxylate N-succinyltransferase (271 aa).

Residues Arg-102 and Asp-139 each coordinate substrate.

Belongs to the transferase hexapeptide repeat family. As to quaternary structure, homotrimer.

It is found in the cytoplasm. The enzyme catalyses (S)-2,3,4,5-tetrahydrodipicolinate + succinyl-CoA + H2O = (S)-2-succinylamino-6-oxoheptanedioate + CoA. The protein operates within amino-acid biosynthesis; L-lysine biosynthesis via DAP pathway; LL-2,6-diaminopimelate from (S)-tetrahydrodipicolinate (succinylase route): step 1/3. This chain is 2,3,4,5-tetrahydropyridine-2,6-dicarboxylate N-succinyltransferase, found in Coxiella burnetii (strain Dugway 5J108-111).